A 173-amino-acid polypeptide reads, in one-letter code: Putative pre-16S rRNA nuclease (173 aa).

It belongs to the YqgF nuclease family.

Its subcellular location is the cytoplasm. Could be a nuclease involved in processing of the 5'-end of pre-16S rRNA. The polypeptide is Putative pre-16S rRNA nuclease (Rhodopirellula baltica (strain DSM 10527 / NCIMB 13988 / SH1)).